Consider the following 397-residue polypeptide: Lysophospholipid transporter LplT (397 aa).

At 1 to 17 (MSESVHTNTSLWSKGMK) the chain is on the periplasmic side. A helical transmembrane segment spans residues 18–38 (AVIVAQFLSAFGDNALLFATL). Topologically, residues 39–52 (ALLKAQFYPEWSQP) are cytoplasmic. The chain crosses the membrane as a helical span at residues 53–73 (VLQMVFVGAYILFAPFVGQVA). Residues 74 to 90 (DSFAKGRVMMFANGLKL) are Periplasmic-facing. A helical membrane pass occupies residues 91–111 (LGAASICFGFNPFVGYTLVGI). The Cytoplasmic segment spans residues 112-144 (GAAAYSPAKYGILGELTTGDKLVKANGLMEAST). The chain crosses the membrane as a helical span at residues 145-165 (IAAILLGSVAGGVLADLHVLV). Residue Ala-166 is a topological domain, periplasmic. A helical transmembrane segment spans residues 167–187 (LAACALAYAGAVAANIYIPKL). Over 188-226 (AAARPGQSWNVLKMTCSFKSACTSLWQNGETRFSLVGTS) the chain is Cytoplasmic. The helical transmembrane segment at 227-247 (LFWGAGVTLRFLLVLWVPVAL) threads the bilayer. Residues 248–256 (GITDNATPT) lie on the Periplasmic side of the membrane. The helical transmembrane segment at 257 to 277 (YLNAMVAIGIVLGAGAAAKLV) threads the bilayer. Over 278–280 (TLE) the chain is Cytoplasmic. The helical transmembrane segment at 281-301 (TVSRCMPAGILIGVVVLFFSL) threads the bilayer. The Periplasmic portion of the chain corresponds to 302 to 304 (QHE). A helical transmembrane segment spans residues 305–325 (LLPAYALLMLIGVLGGFFVVP). Residues 326 to 343 (LNALLQERGKKSVGAGNA) are Cytoplasmic-facing. The helical transmembrane segment at 344-364 (IAVQNLGENSAMLLMLGIYSL) threads the bilayer. Over 365–366 (AV) the chain is Periplasmic. The helical transmembrane segment at 367-387 (LVGIPVVPIGIGFGTLFALAI) threads the bilayer. Over 388–397 (TALWIWQRRH) the chain is Cytoplasmic.

Belongs to the major facilitator superfamily. LplT (TC 2.A.1.42) family.

It is found in the cell inner membrane. Its function is as follows. Catalyzes the facilitated diffusion of 2-acyl-glycero-3-phosphoethanolamine (2-acyl-GPE) into the cell. The sequence is that of Lysophospholipid transporter LplT from Escherichia fergusonii (strain ATCC 35469 / DSM 13698 / CCUG 18766 / IAM 14443 / JCM 21226 / LMG 7866 / NBRC 102419 / NCTC 12128 / CDC 0568-73).